The sequence spans 229 residues: Large ribosomal subunit protein uL1 (229 aa).

The protein belongs to the universal ribosomal protein uL1 family. Part of the 50S ribosomal subunit.

Binds directly to 23S rRNA. The L1 stalk is quite mobile in the ribosome, and is involved in E site tRNA release. Its function is as follows. Protein L1 is also a translational repressor protein, it controls the translation of the L11 operon by binding to its mRNA. The chain is Large ribosomal subunit protein uL1 from Streptococcus pyogenes serotype M3 (strain SSI-1).